Consider the following 100-residue polypeptide: Nucleoid-associated protein ckrop_0143 (100 aa).

Belongs to the YbaB/EbfC family. Homodimer.

It is found in the cytoplasm. The protein resides in the nucleoid. Functionally, binds to DNA and alters its conformation. May be involved in regulation of gene expression, nucleoid organization and DNA protection. The polypeptide is Nucleoid-associated protein ckrop_0143 (Corynebacterium kroppenstedtii (strain DSM 44385 / JCM 11950 / CIP 105744 / CCUG 35717)).